The sequence spans 98 residues: Small ribosomal subunit protein eS24 (98 aa).

This sequence belongs to the eukaryotic ribosomal protein eS24 family.

The protein is Small ribosomal subunit protein eS24 of Thermococcus gammatolerans (strain DSM 15229 / JCM 11827 / EJ3).